The following is a 215-amino-acid chain: NADH-quinone oxidoreductase subunit C (215 aa).

The protein belongs to the complex I 30 kDa subunit family. NDH-1 is composed of 14 different subunits. Subunits NuoB, C, D, E, F, and G constitute the peripheral sector of the complex.

The protein localises to the cell inner membrane. The enzyme catalyses a quinone + NADH + 5 H(+)(in) = a quinol + NAD(+) + 4 H(+)(out). In terms of biological role, NDH-1 shuttles electrons from NADH, via FMN and iron-sulfur (Fe-S) centers, to quinones in the respiratory chain. The immediate electron acceptor for the enzyme in this species is believed to be ubiquinone. Couples the redox reaction to proton translocation (for every two electrons transferred, four hydrogen ions are translocated across the cytoplasmic membrane), and thus conserves the redox energy in a proton gradient. This chain is NADH-quinone oxidoreductase subunit C, found in Bordetella parapertussis (strain 12822 / ATCC BAA-587 / NCTC 13253).